Here is a 501-residue protein sequence, read N- to C-terminus: Probable cytosol aminopeptidase (501 aa).

Lys-257 and Asp-262 together coordinate Mn(2+). The active site involves Lys-269. Mn(2+)-binding residues include Asp-281, Asp-341, and Glu-343. Arg-345 is a catalytic residue.

It belongs to the peptidase M17 family. Mn(2+) is required as a cofactor.

Its subcellular location is the cytoplasm. The enzyme catalyses Release of an N-terminal amino acid, Xaa-|-Yaa-, in which Xaa is preferably Leu, but may be other amino acids including Pro although not Arg or Lys, and Yaa may be Pro. Amino acid amides and methyl esters are also readily hydrolyzed, but rates on arylamides are exceedingly low.. The catalysed reaction is Release of an N-terminal amino acid, preferentially leucine, but not glutamic or aspartic acids.. Presumably involved in the processing and regular turnover of intracellular proteins. Catalyzes the removal of unsubstituted N-terminal amino acids from various peptides. This Synechococcus sp. (strain RCC307) protein is Probable cytosol aminopeptidase.